Here is a 410-residue protein sequence, read N- to C-terminus: Acetate kinase (410 aa).

Mg(2+) is bound at residue N7. K14 lines the ATP pocket. Residue R98 participates in substrate binding. The active-site Proton donor/acceptor is D155. Residues 215–219 (HLGNG), 290–292 (DMR), and 338–342 (GIGEN) contribute to the ATP site. E392 contacts Mg(2+).

This sequence belongs to the acetokinase family. As to quaternary structure, homodimer. Requires Mg(2+) as cofactor. It depends on Mn(2+) as a cofactor.

Its subcellular location is the cytoplasm. The catalysed reaction is acetate + ATP = acetyl phosphate + ADP. It participates in metabolic intermediate biosynthesis; acetyl-CoA biosynthesis; acetyl-CoA from acetate: step 1/2. In terms of biological role, catalyzes the formation of acetyl phosphate from acetate and ATP. Can also catalyze the reverse reaction. In Kocuria rhizophila (strain ATCC 9341 / DSM 348 / NBRC 103217 / DC2201), this protein is Acetate kinase.